The primary structure comprises 906 residues: Protein translocase subunit SecA (906 aa).

ATP is bound by residues Q87, 105-109, and D512; that span reads GEGKT. The interval 879–906 is disordered; the sequence is REGEKIGRNDPCPCGSGQKYKQCHGKLS. 4 residues coordinate Zn(2+): C890, C892, C901, and H902.

The protein belongs to the SecA family. As to quaternary structure, monomer and homodimer. Part of the essential Sec protein translocation apparatus which comprises SecA, SecYEG and auxiliary proteins SecDF-YajC and YidC. Zn(2+) is required as a cofactor.

The protein resides in the cell inner membrane. It localises to the cytoplasm. It catalyses the reaction ATP + H2O + cellular proteinSide 1 = ADP + phosphate + cellular proteinSide 2.. Its function is as follows. Part of the Sec protein translocase complex. Interacts with the SecYEG preprotein conducting channel. Has a central role in coupling the hydrolysis of ATP to the transfer of proteins into and across the cell membrane, serving both as a receptor for the preprotein-SecB complex and as an ATP-driven molecular motor driving the stepwise translocation of polypeptide chains across the membrane. In Shewanella frigidimarina (strain NCIMB 400), this protein is Protein translocase subunit SecA.